Here is a 351-residue protein sequence, read N- to C-terminus: UDP-N-acetylglucosamine--N-acetylmuramyl-(pentapeptide) pyrophosphoryl-undecaprenol N-acetylglucosamine transferase (351 aa).

Residues 12–14, Asn124, Arg160, Ser188, Ile239, 258–263, and Gln283 contribute to the UDP-N-acetyl-alpha-D-glucosamine site; these read TGG and ALTVCE.

It belongs to the glycosyltransferase 28 family. MurG subfamily.

The protein localises to the cell inner membrane. The enzyme catalyses di-trans,octa-cis-undecaprenyl diphospho-N-acetyl-alpha-D-muramoyl-L-alanyl-D-glutamyl-meso-2,6-diaminopimeloyl-D-alanyl-D-alanine + UDP-N-acetyl-alpha-D-glucosamine = di-trans,octa-cis-undecaprenyl diphospho-[N-acetyl-alpha-D-glucosaminyl-(1-&gt;4)]-N-acetyl-alpha-D-muramoyl-L-alanyl-D-glutamyl-meso-2,6-diaminopimeloyl-D-alanyl-D-alanine + UDP + H(+). It participates in cell wall biogenesis; peptidoglycan biosynthesis. Its function is as follows. Cell wall formation. Catalyzes the transfer of a GlcNAc subunit on undecaprenyl-pyrophosphoryl-MurNAc-pentapeptide (lipid intermediate I) to form undecaprenyl-pyrophosphoryl-MurNAc-(pentapeptide)GlcNAc (lipid intermediate II). The chain is UDP-N-acetylglucosamine--N-acetylmuramyl-(pentapeptide) pyrophosphoryl-undecaprenol N-acetylglucosamine transferase from Glaesserella parasuis serovar 5 (strain SH0165) (Haemophilus parasuis).